The primary structure comprises 303 residues: Aquaporin NIP1-2 (303 aa).

A disordered region spans residues 1–39 (MAGREDGAAAGAMEEGQDSKEVKCESSEDGSSSSSSSRC). Over residues 17 to 26 (QDSKEVKCES) the composition is skewed to basic and acidic residues. 2 helical membrane passes run 66–86 (ILAE…AVVV) and 91–111 (GGAV…MVLV). The short motif at 123-125 (NPA) is the NPA 1 element. 3 helical membrane-spanning segments follow: residues 145-165 (VVAQ…VFGG), 188-208 (AAAL…GVAT), and 212-232 (AIGE…VLFA). The NPA 2 motif lies at 241–243 (NPA). A helical transmembrane segment spans residues 255–275 (YGGVWVYVAAPVSGTVCGAWA).

It belongs to the MIP/aquaporin (TC 1.A.8) family. NIP (TC 1.A.8.12) subfamily. Expressed in roots and leaves, and at lower levels in anthers.

The protein resides in the membrane. Aquaporins facilitate the transport of water and small neutral solutes across cell membranes. The sequence is that of Aquaporin NIP1-2 (NIP1-2) from Oryza sativa subsp. japonica (Rice).